Here is a 329-residue protein sequence, read N- to C-terminus: UDP-3-O-acylglucosamine N-acyltransferase (329 aa).

Histidine 224 (proton acceptor) is an active-site residue.

Belongs to the transferase hexapeptide repeat family. LpxD subfamily. As to quaternary structure, homotrimer.

The catalysed reaction is a UDP-3-O-[(3R)-3-hydroxyacyl]-alpha-D-glucosamine + a (3R)-hydroxyacyl-[ACP] = a UDP-2-N,3-O-bis[(3R)-3-hydroxyacyl]-alpha-D-glucosamine + holo-[ACP] + H(+). Its pathway is bacterial outer membrane biogenesis; LPS lipid A biosynthesis. Catalyzes the N-acylation of UDP-3-O-acylglucosamine using 3-hydroxyacyl-ACP as the acyl donor. Is involved in the biosynthesis of lipid A, a phosphorylated glycolipid that anchors the lipopolysaccharide to the outer membrane of the cell. This is UDP-3-O-acylglucosamine N-acyltransferase from Albidiferax ferrireducens (strain ATCC BAA-621 / DSM 15236 / T118) (Rhodoferax ferrireducens).